Here is a 213-residue protein sequence, read N- to C-terminus: Probable germin-like protein subfamily 2 member 5 (213 aa).

The first 22 residues, 1 to 22, serve as a signal peptide directing secretion; it reads MASFATHLVVVVTMLFVAMASA. The cysteines at positions 29 and 44 are disulfide-linked. The 146-residue stretch at 58 to 203 folds into the Cupin type-1 domain; sequence KGLANIAATN…SFQLKHKQVK (146 aa). N-linked (GlcNAc...) asparagine glycosylation occurs at asparagine 67. 4 residues coordinate Mn(2+): histidine 106, histidine 108, glutamate 113, and histidine 152.

It belongs to the germin family. In terms of assembly, oligomer (believed to be a pentamer but probably hexamer).

The protein resides in the secreted. It localises to the extracellular space. Its subcellular location is the apoplast. Its function is as follows. May play a role in plant defense. Probably has no oxalate oxidase activity even if the active site is conserved. This is Probable germin-like protein subfamily 2 member 5 from Arabidopsis thaliana (Mouse-ear cress).